A 278-amino-acid chain; its full sequence is Neuronal membrane glycoprotein M6-a (278 aa).

Position 1 is an N-acetylmethionine (methionine 1). At 1-22 the chain is on the cytoplasmic side; the sequence is MEENMEEGQTQKGCFECCIKCL. A helical membrane pass occupies residues 23-43; the sequence is GGIPYASLIATILLYAGVALF. Residues 44–84 lie on the Extracellular side of the membrane; the sequence is CGCGHEALSGTVNILQTYFEMARTAGDTLDVFTMIDIFKYV. Residues 85–105 traverse the membrane as a helical segment; sequence IYGIAAAFFVYGILLMVEGFF. Topologically, residues 106–127 are cytoplasmic; it reads TTGAIKDLYGDFKITTCGRCVS. The chain crosses the membrane as a helical span at residues 128-148; that stretch reads AWFIMLTYLFMLAWLGVTAFT. At 149–213 the chain is on the extracellular side; it reads SLPVYMYFNV…STELNMTFHL (65 aa). A glycan (N-linked (GlcNAc...) asparagine) is linked at asparagine 164. An intrachain disulfide couples cysteine 174 to cysteine 192. N-linked (GlcNAc...) asparagine glycosylation occurs at asparagine 208. A helical membrane pass occupies residues 214 to 234; that stretch reads FIVALAGAGAAVIAMVHYLMV. The Cytoplasmic portion of the chain corresponds to 235–278; sequence LSANWAYVKDACRMQKYEDIKSKEEQELHDIHSTRSKERLNAYT. Position 256 is a phosphoserine (serine 256). Threonine 278 bears the Phosphothreonine mark.

It belongs to the myelin proteolipid protein family. In terms of assembly, interacts with OPRM1. Interacts with palmitoyltransferase ZDHHC17/HIP14; the interaction leads to palmitoylation of GPM6A. N-glycosylated. Post-translationally, palmitoylated by ZDHHC17/HIP14. Expressed in hippocampus (at protein level). Isoform 1 is the predominant isoform expressed in brain, specifically in hippocampus. Isoform 2 is expressed at low levels in brain and kidney.

The protein localises to the cell membrane. It localises to the cell projection. It is found in the axon. Its subcellular location is the growth cone. The protein resides in the dendritic spine. The protein localises to the filopodium. It localises to the neuron projection. Its function is as follows. Involved in neuronal differentiation, including differentiation and migration of neuronal stem cells. Plays a role in neuronal plasticity and is involved in neurite and filopodia outgrowth, filopodia motility and probably synapse formation. Gpm6a-induced filopodia formation involves mitogen-activated protein kinase (MAPK) and Src signaling pathways. May be involved in neuronal NGF-dependent Ca(2+) influx. May be involved in regulation of endocytosis and intracellular trafficking of G-protein-coupled receptors (GPCRs); enhances internalization and recycling of mu-type opioid receptor. The protein is Neuronal membrane glycoprotein M6-a (Gpm6a) of Rattus norvegicus (Rat).